The chain runs to 252 residues: Type III pantothenate kinase (252 aa).

ATP is bound at residue 6–13 (DIGNTNIV). 107 to 110 (GADL) serves as a coordination point for substrate. Residue Asp-109 is the Proton acceptor of the active site. Residue Asp-129 coordinates K(+). Position 132 (Thr-132) interacts with ATP. Thr-184 contributes to the substrate binding site.

This sequence belongs to the type III pantothenate kinase family. Homodimer. The cofactor is NH4(+). It depends on K(+) as a cofactor.

Its subcellular location is the cytoplasm. The catalysed reaction is (R)-pantothenate + ATP = (R)-4'-phosphopantothenate + ADP + H(+). The protein operates within cofactor biosynthesis; coenzyme A biosynthesis; CoA from (R)-pantothenate: step 1/5. Catalyzes the phosphorylation of pantothenate (Pan), the first step in CoA biosynthesis. The sequence is that of Type III pantothenate kinase from Bifidobacterium animalis subsp. lactis (strain AD011).